Consider the following 155-residue polypeptide: NADPH-dependent 7-cyano-7-deazaguanine reductase (155 aa).

Cys-53 functions as the Thioimide intermediate in the catalytic mechanism. Asp-60 serves as the catalytic Proton donor. Substrate is bound by residues 75-77 and 94-95; these read VES and HE.

It belongs to the GTP cyclohydrolase I family. QueF type 1 subfamily.

The protein localises to the cytoplasm. It carries out the reaction 7-aminomethyl-7-carbaguanine + 2 NADP(+) = 7-cyano-7-deazaguanine + 2 NADPH + 3 H(+). It functions in the pathway tRNA modification; tRNA-queuosine biosynthesis. Catalyzes the NADPH-dependent reduction of 7-cyano-7-deazaguanine (preQ0) to 7-aminomethyl-7-deazaguanine (preQ1). In Brucella suis (strain ATCC 23445 / NCTC 10510), this protein is NADPH-dependent 7-cyano-7-deazaguanine reductase.